The sequence spans 306 residues: Heme A synthase (306 aa).

The Cytoplasmic segment spans residues 1–5; that stretch reads MKALR. The helical transmembrane segment at 6-26 threads the bilayer; the sequence is AVSLANTAVMLLAVLWGAWVT. At 27–56 the chain is on the extracellular side; that stretch reads SSDSGDGCGASWPLCKGTFMPDWDYAAIVE. Cys34 and Cys41 are joined by a disulfide. Glu56 is an active-site residue. The helical transmembrane segment at 57-77 threads the bilayer; that stretch reads FGHRVVSALAGLLSVAVLVWV. Heme o is bound at residue His59. At 78 to 89 the chain is on the cytoplasmic side; it reads ARVRPSETRLKR. A helical membrane pass occupies residues 90–110; the sequence is LAFGTFFFVVLQGGLGAAAVL. Topologically, residues 111-116 are extracellular; sequence RPQPDL. A helical membrane pass occupies residues 117–137; the sequence is VMALHFGFSLLCFTFALLVTV. A heme o-binding site is contributed by His121. Residues 138–164 are Cytoplasmic-facing; that stretch reads ALGQGERAAFQRPDVSAQPVAPGLRTQ. Residues 165 to 185 traverse the membrane as a helical segment; that stretch reads IWGLAVYTYLVVYLGAYVRHL. Topologically, residues 186 to 206 are extracellular; sequence GASMACTGWPLCNGELIPPLY. The cysteines at positions 191 and 197 are disulfide-linked. The chain crosses the membrane as a helical span at residues 207 to 227; that stretch reads GPVGANFAHRLGAALAVVLVL. Residue His215 participates in heme b binding. Over 228-247 the chain is Cytoplasmic; the sequence is RLWWTARRLTERDDLRRGAA. A helical membrane pass occupies residues 248–268; sequence WALALMAAQVASGALFPLGYL. Residues 269-277 lie on the Extracellular side of the membrane; that stretch reads NLLTQLLHT. His276 contributes to the heme b binding site. A helical transmembrane segment spans residues 278–298; the sequence is GLITGFWGVLSYLCYLTLPVG. At 299 to 306 the chain is on the cytoplasmic side; sequence RETVAVSA.

The protein belongs to the COX15/CtaA family. Type 1 subfamily. As to quaternary structure, interacts with CtaB. Requires heme b as cofactor.

It is found in the cell membrane. The catalysed reaction is Fe(II)-heme o + 2 A + H2O = Fe(II)-heme a + 2 AH2. The protein operates within porphyrin-containing compound metabolism; heme A biosynthesis; heme A from heme O: step 1/1. Its function is as follows. Catalyzes the conversion of heme O to heme A by two successive hydroxylations of the methyl group at C8. The first hydroxylation forms heme I, the second hydroxylation results in an unstable dihydroxymethyl group, which spontaneously dehydrates, resulting in the formyl group of heme A. The protein is Heme A synthase of Symbiobacterium thermophilum (strain DSM 24528 / JCM 14929 / IAM 14863 / T).